Consider the following 474-residue polypeptide: Pyoverdine export outer membrane protein OpmQ (474 aa).

The first 17 residues, 1-17, serve as a signal peptide directing secretion; it reads MSMKNLSLISACLLLGA. A lipid anchor (N-palmitoyl cysteine) is attached at Cys-18. The S-diacylglycerol cysteine moiety is linked to residue Cys-18.

It belongs to the outer membrane factor (OMF) (TC 1.B.17) family. As to quaternary structure, part of the tripartite efflux system PvdRT-OpmQ, which is composed of an inner membrane component with both ATPase and permease domains, PvdT, a periplasmic membrane fusion protein, PvdR, and an outer membrane component, OpmQ.

It localises to the cell outer membrane. In terms of biological role, part of the tripartite efflux system PvdRT-OpmQ required for the secretion into the extracellular milieu of the siderophore pyoverdine (PVD), which is involved in iron acquisition. The system is responsible for export of newly synthesized PVD after the final steps of biosynthesis have taken place in the periplasm. It is also responsible for recycling of PVD after internalization of ferri-PVD into the periplasm by the outer-membrane receptor FpvA and release of iron from PVD, thus making PVD available for new cycles of iron uptake. In addition, can expel unwanted metals complexed with PVD from the periplasm into the extracellular medium. The polypeptide is Pyoverdine export outer membrane protein OpmQ (Pseudomonas aeruginosa (strain ATCC 15692 / DSM 22644 / CIP 104116 / JCM 14847 / LMG 12228 / 1C / PRS 101 / PAO1)).